Reading from the N-terminus, the 184-residue chain is Small ribosomal subunit protein uS4c (184 aa).

Positions 82–143 constitute an S4 RNA-binding domain; the sequence is MRLDNILFRL…KQRSKALIQN (62 aa).

This sequence belongs to the universal ribosomal protein uS4 family. In terms of assembly, part of the 30S ribosomal subunit. Contacts protein S5. The interaction surface between S4 and S5 is involved in control of translational fidelity.

Its subcellular location is the plastid. It localises to the chloroplast. In terms of biological role, one of the primary rRNA binding proteins, it binds directly to 16S rRNA where it nucleates assembly of the body of the 30S subunit. Its function is as follows. With S5 and S12 plays an important role in translational accuracy. This Patersonia fragilis (Short purple-flag) protein is Small ribosomal subunit protein uS4c (rps4).